We begin with the raw amino-acid sequence, 264 residues long: tRNA pseudouridine synthase A (264 aa).

Aspartate 51 (nucleophile) is an active-site residue. Residue tyrosine 109 participates in substrate binding.

Belongs to the tRNA pseudouridine synthase TruA family. Homodimer.

The enzyme catalyses uridine(38/39/40) in tRNA = pseudouridine(38/39/40) in tRNA. Functionally, formation of pseudouridine at positions 38, 39 and 40 in the anticodon stem and loop of transfer RNAs. This is tRNA pseudouridine synthase A from Vibrio vulnificus (strain CMCP6).